A 131-amino-acid chain; its full sequence is uncharacterized protein (131 aa).

The region spanning 8–124 (DILVVDDDPD…ELIRLVQQYC (117 aa)) is the Response regulatory domain. D57 carries the 4-aspartylphosphate modification.

This is an uncharacterized protein from Leptolyngbya boryana (Plectonema boryanum).